Reading from the N-terminus, the 269-residue chain is Ribosomal RNA small subunit methyltransferase J (269 aa).

S-adenosyl-L-methionine is bound by residues 125–126 (ER) and Asp179.

The protein belongs to the methyltransferase superfamily. RsmJ family.

Its subcellular location is the cytoplasm. It carries out the reaction guanosine(1516) in 16S rRNA + S-adenosyl-L-methionine = N(2)-methylguanosine(1516) in 16S rRNA + S-adenosyl-L-homocysteine + H(+). In terms of biological role, specifically methylates the guanosine in position 1516 of 16S rRNA. The sequence is that of Ribosomal RNA small subunit methyltransferase J from Pseudomonas savastanoi pv. phaseolicola (strain 1448A / Race 6) (Pseudomonas syringae pv. phaseolicola (strain 1448A / Race 6)).